We begin with the raw amino-acid sequence, 172 residues long: uncharacterized protein (172 aa).

Disordered stretches follow at residues 1–54 (MPRR…GGSS) and 82–111 (ITGG…SVPE). The span at 14-29 (AAPARSASTAAALPPR) shows a compositional bias: low complexity. Pro residues predominate over residues 30-47 (TMAPPPAPSRVQQAPPPT). The span at 89–109 (SGSNNAPADTSVPQSSYSNSV) shows a compositional bias: polar residues.

This is an uncharacterized protein from Schizosaccharomyces pombe (strain 972 / ATCC 24843) (Fission yeast).